The primary structure comprises 404 residues: Glycerol-1-phosphate dehydrogenase [NAD(P)+] (404 aa).

Residues D56, 118–122 (GTIHD), and 140–143 (TAPS) contribute to the NAD(+) site. D145 contributes to the substrate binding site. Residue S149 participates in NAD(+) binding. D192 contributes to the substrate binding site. Ni(2+)-binding residues include D192 and H272. H276 is a substrate binding site. Residue H292 coordinates Ni(2+).

Belongs to the glycerol-1-phosphate dehydrogenase family. Homodimer. Ni(2+) is required as a cofactor.

It is found in the cytoplasm. It carries out the reaction sn-glycerol 1-phosphate + NAD(+) = dihydroxyacetone phosphate + NADH + H(+). The enzyme catalyses sn-glycerol 1-phosphate + NADP(+) = dihydroxyacetone phosphate + NADPH + H(+). Catalyzes the NAD(P)H-dependent reduction of dihydroxyacetonephosphate (DHAP or glycerone phosphate) to glycerol 1-phosphate (G1P). The G1P thus generated is probably used for the synthesis of phosphoglycerolipids in Gram-positive bacterial species. The sequence is that of Glycerol-1-phosphate dehydrogenase [NAD(P)+] from Geobacillus stearothermophilus (Bacillus stearothermophilus).